The sequence spans 449 residues: Tubulin beta chain (449 aa).

GTP is bound by residues glutamine 11, glutamate 69, serine 138, glycine 142, threonine 143, glycine 144, asparagine 204, and asparagine 226. Glutamate 69 provides a ligand contact to Mg(2+).

The protein belongs to the tubulin family. In terms of assembly, dimer of alpha and beta chains. A typical microtubule is a hollow water-filled tube with an outer diameter of 25 nm and an inner diameter of 15 nM. Alpha-beta heterodimers associate head-to-tail to form protofilaments running lengthwise along the microtubule wall with the beta-tubulin subunit facing the microtubule plus end conferring a structural polarity. Microtubules usually have 13 protofilaments but different protofilament numbers can be found in some organisms and specialized cells. Requires Mg(2+) as cofactor.

The protein localises to the cytoplasm. Its subcellular location is the cytoskeleton. Tubulin is the major constituent of microtubules, a cylinder consisting of laterally associated linear protofilaments composed of alpha- and beta-tubulin heterodimers. Microtubules grow by the addition of GTP-tubulin dimers to the microtubule end, where a stabilizing cap forms. Below the cap, tubulin dimers are in GDP-bound state, owing to GTPase activity of alpha-tubulin. This chain is Tubulin beta chain (TUB2), found in Candida albicans (Yeast).